The sequence spans 223 residues: Receptor-transporting protein 2 (223 aa).

The Cytoplasmic portion of the chain corresponds to 1–193 (MSTSLTTCEW…KKGQAGFISS (193 aa)). A 3CxxC-type zinc finger spans residues 52-161 (ASGRFHCSWC…SEFCEACQEG (110 aa)). The chain crosses the membrane as a helical span at residues 194-216 (FFSFRWCLFWGTLCLVIVYLQFF). Residues 217–223 (RGRSGFL) lie on the Extracellular side of the membrane.

This sequence belongs to the TMEM7 family. As to quaternary structure, interacts with olfactory receptors. Predominantly expressed in olfactory and vomeronasal organs, in mature olfactory sensory neurons.

It localises to the cell membrane. Functionally, specifically promotes functional cell surface expression of olfactory receptors, but not of other GPCRs. This Mus musculus (Mouse) protein is Receptor-transporting protein 2 (Rtp2).